We begin with the raw amino-acid sequence, 397 residues long: Lipid-A-disaccharide synthase (397 aa).

The protein belongs to the LpxB family.

It catalyses the reaction a lipid X + a UDP-2-N,3-O-bis[(3R)-3-hydroxyacyl]-alpha-D-glucosamine = a lipid A disaccharide + UDP + H(+). It participates in bacterial outer membrane biogenesis; LPS lipid A biosynthesis. Functionally, condensation of UDP-2,3-diacylglucosamine and 2,3-diacylglucosamine-1-phosphate to form lipid A disaccharide, a precursor of lipid A, a phosphorylated glycolipid that anchors the lipopolysaccharide to the outer membrane of the cell. In Mannheimia succiniciproducens (strain KCTC 0769BP / MBEL55E), this protein is Lipid-A-disaccharide synthase.